The primary structure comprises 865 residues: Outer membrane usher protein HtrE (865 aa).

Residues 1-29 form the signal peptide; sequence MTIEYTKNYHHLTRIATFCALLYCNTAFS. The cysteines at positions 838 and 862 are disulfide-linked.

This sequence belongs to the fimbrial export usher family.

It is found in the cell outer membrane. Its function is as follows. Part of the yadCKLM-htrE-yadVN fimbrial operon. Could contribute to adhesion to various surfaces in specific environmental niches. Probably involved in the export and assembly of fimbrial subunits across the outer membrane. In Escherichia coli (strain K12), this protein is Outer membrane usher protein HtrE (htrE).